We begin with the raw amino-acid sequence, 242 residues long: Ubiquinone biosynthesis O-methyltransferase (242 aa).

4 residues coordinate S-adenosyl-L-methionine: arginine 44, glycine 64, aspartate 85, and methionine 129.

It belongs to the methyltransferase superfamily. UbiG/COQ3 family.

The enzyme catalyses a 3-demethylubiquinol + S-adenosyl-L-methionine = a ubiquinol + S-adenosyl-L-homocysteine + H(+). It catalyses the reaction a 3-(all-trans-polyprenyl)benzene-1,2-diol + S-adenosyl-L-methionine = a 2-methoxy-6-(all-trans-polyprenyl)phenol + S-adenosyl-L-homocysteine + H(+). The protein operates within cofactor biosynthesis; ubiquinone biosynthesis. Its function is as follows. O-methyltransferase that catalyzes the 2 O-methylation steps in the ubiquinone biosynthetic pathway. The chain is Ubiquinone biosynthesis O-methyltransferase from Citrobacter koseri (strain ATCC BAA-895 / CDC 4225-83 / SGSC4696).